The chain runs to 228 residues: UPF0173 metal-dependent hydrolase Tpen_1493 (228 aa).

This sequence belongs to the UPF0173 family.

This is UPF0173 metal-dependent hydrolase Tpen_1493 from Thermofilum pendens (strain DSM 2475 / Hrk 5).